We begin with the raw amino-acid sequence, 160 residues long: 6,7-dimethyl-8-ribityllumazine synthase (160 aa).

5-amino-6-(D-ribitylamino)uracil-binding positions include Phe-23, 61–63 (SFE), and 85–87 (AVI). 90–91 (DT) lines the (2S)-2-hydroxy-3-oxobutyl phosphate pocket. His-93 serves as the catalytic Proton donor. Phe-118 lines the 5-amino-6-(D-ribitylamino)uracil pocket. Residue Arg-132 coordinates (2S)-2-hydroxy-3-oxobutyl phosphate.

Belongs to the DMRL synthase family.

It carries out the reaction (2S)-2-hydroxy-3-oxobutyl phosphate + 5-amino-6-(D-ribitylamino)uracil = 6,7-dimethyl-8-(1-D-ribityl)lumazine + phosphate + 2 H2O + H(+). The protein operates within cofactor biosynthesis; riboflavin biosynthesis; riboflavin from 2-hydroxy-3-oxobutyl phosphate and 5-amino-6-(D-ribitylamino)uracil: step 1/2. Its function is as follows. Catalyzes the formation of 6,7-dimethyl-8-ribityllumazine by condensation of 5-amino-6-(D-ribitylamino)uracil with 3,4-dihydroxy-2-butanone 4-phosphate. This is the penultimate step in the biosynthesis of riboflavin. The protein is 6,7-dimethyl-8-ribityllumazine synthase of Parasynechococcus marenigrum (strain WH8102).